We begin with the raw amino-acid sequence, 353 residues long: Mitogen-activated protein kinase FUS3 (353 aa).

One can recognise a Protein kinase domain in the interval 13-309 (FQLKSLLGEG…AKEALEHPYL (297 aa)). Residues 19-27 (LGEGAYGVV) and lysine 42 each bind ATP. Catalysis depends on aspartate 137, which acts as the Proton acceptor. Threonine 180 carries the post-translational modification Phosphothreonine. The short motif at 180-182 (TEY) is the TXY element. Position 182 is a phosphotyrosine (tyrosine 182). Lysine 345 is covalently cross-linked (Glycyl lysine isopeptide (Lys-Gly) (interchain with G-Cter in ubiquitin)).

The protein belongs to the protein kinase superfamily. CMGC Ser/Thr protein kinase family. MAP kinase subfamily. As to quaternary structure, in the nucleus, FUS3 forms a complex with DIG1, DIG2 and STE12. The interaction of FUS3 with STE12 depends on the presence of both DIG1 and DIG2. STE12 is lost from FUS3/DIG1/DIG2 complex after pheromone treatment. During its activation and phosphorylation, FUS3 forms a membrane-associated complex with the scaffold protein STE5, the MAPKK STE7, the MAPKKK STE11, and the G-protein beta subunit GBB/STE4; interacting directly with STE7 and STE5. Mg(2+) is required as a cofactor. Dually phosphorylated on Thr-180 and Tyr-182 by STE7 in response to pheromone induction, which activates the enzyme. Activated FUS3 initiates a feedback signal, down-regulating phosphorylation of both, FUS3 and KSS1.

It is found in the nucleus. The protein resides in the cytoplasm. Its subcellular location is the periplasm. It carries out the reaction L-seryl-[protein] + ATP = O-phospho-L-seryl-[protein] + ADP + H(+). It catalyses the reaction L-threonyl-[protein] + ATP = O-phospho-L-threonyl-[protein] + ADP + H(+). With respect to regulation, activated by tyrosine and threonine phosphorylation after pheromone treatment. In terms of biological role, together with closely related KSS1, FUS3 is the final kinase in the signal transduction cascade regulating activation/repression of the mating and filamentation pathways, induced by pheromone and nitrogen/carbon limitation, respectively. Phosphorylated FUS3 activates the mating but suppresses the filamentation pathway, whereas activated KSS1 activates both pathways. Pheromone-activated FUS3 functions by inhibiting the binding of the transcriptional activator STE12 to filamentation specific genes while inducing its binding to and activity at mating specific genes. Non-activated FUS3 has a repressive effect on STE12 transcriptional activity. KSS1 can partially compensate for the lack of FUS3 but mating efficiency is reduced and the filamentation program is partially activated upon pheromone signaling. FUS3 phosphorylates STE7, STE5, FAR1, DIG1, DIG2 and STE12. This chain is Mitogen-activated protein kinase FUS3 (FUS3), found in Saccharomyces cerevisiae (strain ATCC 204508 / S288c) (Baker's yeast).